We begin with the raw amino-acid sequence, 914 residues long: Solute carrier family 12 member 9 (914 aa).

At 1–36 (MASESSPLLAYRLLGEEGVALPANGAGGPGGASARK) the chain is on the cytoplasmic side. At Ser-6 the chain carries Phosphoserine. A helical membrane pass occupies residues 37–57 (LSTFLGVVVPTVLSMFSIVVF). The Extracellular segment spans residues 58–72 (LRIGFVVGHAGLLQA). A helical transmembrane segment spans residues 73 to 93 (LAMLLVAYFILALTVLSVCAI). Over 94–119 (ATNGAVQGGGAYFMISRTLGPEVGGS) the chain is Cytoplasmic. Residues 120–140 (IGLMFYLANVCGCAVSLLGLV) traverse the membrane as a helical segment. Residues 141-167 (ESVLDVFGADATGPSGLRVLPQGYGWN) lie on the Extracellular side of the membrane. Residues 168–188 (LLYGSLLLGLVGGVCTLGAGL) form a helical membrane-spanning segment. Over 189-193 (YARAS) the chain is Cytoplasmic. The chain crosses the membrane as a helical span at residues 194–214 (FLTFLLVSGSLASVLISFVAV). At 215–262 (GPRDIRLTPRPGPNGSSLPPRFGHFTGFNSSTLKDNLGAGYAEDYTTG) the chain is on the extracellular side. 2 N-linked (GlcNAc...) asparagine glycosylation sites follow: Asn-228 and Asn-243. The helical transmembrane segment at 263-283 (AVMNFASVFAVLFNGCTGIMA) threads the bilayer. Residues 284–297 (GANMSGELKDPSRA) are Cytoplasmic-facing. Residues 298-318 (IPLGTIVAVAYTFFVYVLLFF) form a helical membrane-spanning segment. The Extracellular segment spans residues 319–338 (LSSFTCDRTLLQEDYGFFRA). The chain crosses the membrane as a helical span at residues 339 to 359 (ISLWPPLVLIGIYATALSASM). Residues 360–390 (SSLIGASRILHALARDDLFGVILAPAKVVSR) lie on the Cytoplasmic side of the membrane. The chain crosses the membrane as a helical span at residues 391 to 411 (GGNPWAAVLYSWGLVQLVLLA). Over 412-416 (GKLNT) the chain is Extracellular. Residues 417–437 (LAAVVTVFYLVAYAAVDLSCL) form a helical membrane-spanning segment. Topologically, residues 438 to 466 (SLEWASAPNFRPTFSLFSWHTCLLGVASC) are cytoplasmic. Residues 467 to 487 (LLMMFLISPGAAGGSLLLMGL) form a helical membrane-spanning segment. Over 488-740 (LAALLTARGG…LLRPRGGPGY (253 aa)) the chain is Extracellular. Residues 642 to 678 (LTDPAFSEPADSTREGSSPALSTLFPPPRAPGSPRAL) form a disordered region. Residues 741-761 (VDVCGLFLLQMATILGMVPAW) form a helical membrane-spanning segment. The Cytoplasmic segment spans residues 762–914 (HSARLRIFLC…GVTPVTCTDL (153 aa)). Residues 844 to 863 (QQGRGTGGGPGGPEGGDAEG) are disordered. A compositionally biased stretch (gly residues) spans 847-858 (RGTGGGPGGPEG).

Belongs to the SLC12A transporter family. In terms of assembly, interacts with SLC12A1. In terms of tissue distribution, highly expressed in placenta, brain and kidney. Lower expression in lung, liver and heart.

Its subcellular location is the cell membrane. It is found in the lysosome membrane. Its function is as follows. May be an inhibitor of SLC12A1. Seems to correspond to a subunit of a multimeric transport system and thus, additional subunits may be required for its function. May play a role in lysosomal ion flux and osmoregulation. The protein is Solute carrier family 12 member 9 (SLC12A9) of Homo sapiens (Human).